The chain runs to 572 residues: O-fucosyltransferase 16 (572 aa).

Residues L17–F37 form a helical; Signal-anchor for type II membrane protein membrane-spanning segment. 2 N-linked (GlcNAc...) asparagine glycosylation sites follow: N92 and N136. H274 to R276 lines the substrate pocket. N-linked (GlcNAc...) asparagine glycosylation is found at N446 and N506. Residues E498–D572 are disordered. Positions D521–D541 are enriched in acidic residues. N549 is a glycosylation site (N-linked (GlcNAc...) asparagine). The segment covering D554 to L566 has biased composition (acidic residues).

This sequence belongs to the glycosyltransferase GT106 family.

It localises to the membrane. The protein operates within glycan metabolism. This chain is O-fucosyltransferase 16, found in Arabidopsis thaliana (Mouse-ear cress).